A 354-amino-acid chain; its full sequence is Ornithine transcarbamylase, mitochondrial (354 aa).

A mitochondrion-targeting transit peptide spans 1–32 (MLFNLKNLYRITKLTQNSKHLPRHFCRGPPNQ). Carbamoyl phosphate is bound by residues 90-94 (STRTR), R141, and H168. R141 serves as a coordination point for L-ornithine. Residues N199, 263 to 267 (DTWIS), 302 to 305 (HCLP), and R330 each bind L-ornithine. C303 is an active-site residue. Carbamoyl phosphate is bound at residue R330.

The protein belongs to the aspartate/ornithine carbamoyltransferase superfamily. OTCase family. Homotrimer. Cleavage of the precursor form to the active form occurs only in the kidney. As to expression, expressed in kidney, brain, heart, liver, pancreas, gizzard, small intestine and breast muscle. More abundant in mitochondrion-rich organs (heart, liver and brain) than in other organs. Activity is only detected in the kidney.

It is found in the mitochondrion matrix. It carries out the reaction carbamoyl phosphate + L-ornithine = L-citrulline + phosphate + H(+). Its pathway is nitrogen metabolism; urea cycle; L-citrulline from L-ornithine and carbamoyl phosphate: step 1/1. Inhibition by ornithine increases at higher pH. In terms of biological role, catalyzes the second step of the urea cycle, the condensation of carbamoyl phosphate with L-ornithine to form L-citrulline. The urea cycle ensures the detoxification of ammonia by converting it to urea for excretion. In Gallus gallus (Chicken), this protein is Ornithine transcarbamylase, mitochondrial.